Reading from the N-terminus, the 309-residue chain is Homoserine kinase (309 aa).

ATP is bound at residue 91–101 (PIGSGLGSSAC).

It belongs to the GHMP kinase family. Homoserine kinase subfamily.

It localises to the cytoplasm. It catalyses the reaction L-homoserine + ATP = O-phospho-L-homoserine + ADP + H(+). It functions in the pathway amino-acid biosynthesis; L-threonine biosynthesis; L-threonine from L-aspartate: step 4/5. In terms of biological role, catalyzes the ATP-dependent phosphorylation of L-homoserine to L-homoserine phosphate. This is Homoserine kinase from Klebsiella pneumoniae (strain 342).